The chain runs to 253 residues: Probable transcriptional regulatory protein TM_0466 (253 aa).

The protein belongs to the TACO1 family.

Its subcellular location is the cytoplasm. This is Probable transcriptional regulatory protein TM_0466 from Thermotoga maritima (strain ATCC 43589 / DSM 3109 / JCM 10099 / NBRC 100826 / MSB8).